The sequence spans 427 residues: MEIHGKNFLETLKELEKHVDSAHYVSIDCEFSGLLRDFNLNNKNTLQDRYELLRKSSIRYTILQIGITFIYLQNNGKSSCIPVNINVSPLVKDELHLKRDFCSEASSIKFLIQQGFDFNKQLTEGVPYLSRIEERNLIDKVNERSTDDLTSSILDACDEEILVDARNQIKNWLSSELSHSTSKYLNITTSNRFIRKAIQSLVKIEFPTLKSYPKRTFLQVRKAIENSTTQCSATSKSELKEDIASDQLILNNLNLIKQNVGLRHLWDYILKKKKSVVCHNGMADLVYLFSLFEGKVPETILEFSELCLSSFKSIYDTKLLYLKSDDLQHVSDGIPTDLLSLVSKISLPPVPSNSSSQRSNVSLNSLIECPYKSMMSRKRPHEAGKDSYDTALLFVYYVMRTKHSDIQRWQNVLPIHGSFLDLNKYCS.

This sequence belongs to the CAF1 family.

This is an uncharacterized protein from Schizosaccharomyces pombe (strain 972 / ATCC 24843) (Fission yeast).